Here is a 465-residue protein sequence, read N- to C-terminus: MVEVPSFRSNEHFPQLCDKVTVKWDKKRGRFVEAIEDIPIGTVVCVETGITVNVDPQNCYRCLKITENASFAYCKNCEEFYEPDEIACGEFDELGIFKLAAHLVFSYPFADIASLVQSSDPEPPSCAPKALSTQDIEAIFQLTPFPEIGEAFKAPAIQNAIKRIVESLETDENWGRLDQISRTMTFTKALRIMAERSAKNAHTIYSIEQIESQEDNLPMATGLFPISSIFNHSCTPNISGFFVRNTFIFVSQGVRAREELLDSYGVTYHQHTFEQRTNFLASVSGFICHCESCFKMKSLKVLEKPKKYPETIATNASCFTDITSYTENIPRGSKELENLIIAFARRPDSETYTELIFQFWKKFVENAKFRGITYDPYLVRPYVEMTILAWNKEVGCENEEKMSLLIVTHRLLRNCYVDLHPLSELVVKLVNVVANQNADEINRTLEKLKLRARMLWKYSEQSEDL.

The 248-residue stretch at 18–265 folds into the SET domain; sequence DKVTVKWDKK…AREELLDSYG (248 aa).

It belongs to the class V-like SAM-binding methyltransferase superfamily.

This Caenorhabditis elegans protein is SET domain-containing protein 3 (set-3).